The primary structure comprises 427 residues: 3-phosphoshikimate 1-carboxyvinyltransferase (427 aa).

K22, S23, and R27 together coordinate 3-phosphoshikimate. Position 22 (K22) interacts with phosphoenolpyruvate. Residues G96 and R124 each coordinate phosphoenolpyruvate. Positions 169, 170, 171, 197, 313, 336, and 340 each coordinate 3-phosphoshikimate. Q171 serves as a coordination point for phosphoenolpyruvate. D313 (proton acceptor) is an active-site residue. Phosphoenolpyruvate is bound by residues R344, R386, and K411.

Belongs to the EPSP synthase family. As to quaternary structure, monomer.

The protein resides in the cytoplasm. It catalyses the reaction 3-phosphoshikimate + phosphoenolpyruvate = 5-O-(1-carboxyvinyl)-3-phosphoshikimate + phosphate. Its pathway is metabolic intermediate biosynthesis; chorismate biosynthesis; chorismate from D-erythrose 4-phosphate and phosphoenolpyruvate: step 6/7. Its function is as follows. Catalyzes the transfer of the enolpyruvyl moiety of phosphoenolpyruvate (PEP) to the 5-hydroxyl of shikimate-3-phosphate (S3P) to produce enolpyruvyl shikimate-3-phosphate and inorganic phosphate. The sequence is that of 3-phosphoshikimate 1-carboxyvinyltransferase from Salmonella paratyphi A (strain ATCC 9150 / SARB42).